Consider the following 506-residue polypeptide: Asparagine--tRNA ligase (506 aa).

The protein belongs to the class-II aminoacyl-tRNA synthetase family. In terms of assembly, homodimer.

The protein resides in the cytoplasm. The catalysed reaction is tRNA(Asn) + L-asparagine + ATP = L-asparaginyl-tRNA(Asn) + AMP + diphosphate + H(+). The sequence is that of Asparagine--tRNA ligase from Onion yellows phytoplasma (strain OY-M).